Consider the following 532-residue polypeptide: Bifunctional purine biosynthesis protein PurH (532 aa).

Positions M1 to V148 constitute an MGS-like domain.

It belongs to the PurH family.

It catalyses the reaction (6R)-10-formyltetrahydrofolate + 5-amino-1-(5-phospho-beta-D-ribosyl)imidazole-4-carboxamide = 5-formamido-1-(5-phospho-D-ribosyl)imidazole-4-carboxamide + (6S)-5,6,7,8-tetrahydrofolate. The catalysed reaction is IMP + H2O = 5-formamido-1-(5-phospho-D-ribosyl)imidazole-4-carboxamide. It functions in the pathway purine metabolism; IMP biosynthesis via de novo pathway; 5-formamido-1-(5-phospho-D-ribosyl)imidazole-4-carboxamide from 5-amino-1-(5-phospho-D-ribosyl)imidazole-4-carboxamide (10-formyl THF route): step 1/1. The protein operates within purine metabolism; IMP biosynthesis via de novo pathway; IMP from 5-formamido-1-(5-phospho-D-ribosyl)imidazole-4-carboxamide: step 1/1. This Alteromonas mediterranea (strain DSM 17117 / CIP 110805 / LMG 28347 / Deep ecotype) protein is Bifunctional purine biosynthesis protein PurH.